The chain runs to 401 residues: 1-deoxy-D-xylulose 5-phosphate reductoisomerase (401 aa).

Thr-11, Gly-12, Ser-13, Ile-14, Arg-38, Asn-39, and Asn-125 together coordinate NADPH. Residue Lys-126 participates in 1-deoxy-D-xylulose 5-phosphate binding. Glu-127 lines the NADPH pocket. Residue Asp-151 participates in Mn(2+) binding. Residues Ser-152, Glu-153, Ser-179, and His-202 each contribute to the 1-deoxy-D-xylulose 5-phosphate site. Position 153 (Glu-153) interacts with Mn(2+). Gly-208 lines the NADPH pocket. 1-deoxy-D-xylulose 5-phosphate contacts are provided by Ser-215, Asn-220, Lys-221, and Glu-224. Residue Glu-224 participates in Mn(2+) binding.

The protein belongs to the DXR family. Requires Mg(2+) as cofactor. Mn(2+) serves as cofactor.

It carries out the reaction 2-C-methyl-D-erythritol 4-phosphate + NADP(+) = 1-deoxy-D-xylulose 5-phosphate + NADPH + H(+). The protein operates within isoprenoid biosynthesis; isopentenyl diphosphate biosynthesis via DXP pathway; isopentenyl diphosphate from 1-deoxy-D-xylulose 5-phosphate: step 1/6. Its function is as follows. Catalyzes the NADPH-dependent rearrangement and reduction of 1-deoxy-D-xylulose-5-phosphate (DXP) to 2-C-methyl-D-erythritol 4-phosphate (MEP). The chain is 1-deoxy-D-xylulose 5-phosphate reductoisomerase from Paraburkholderia phymatum (strain DSM 17167 / CIP 108236 / LMG 21445 / STM815) (Burkholderia phymatum).